The primary structure comprises 389 residues: Odorant receptor 85c (389 aa).

The Cytoplasmic segment spans residues 1–33; sequence MKFMKYAVFFYTSVGIEPYTIDSRSKKASLWSH. The chain crosses the membrane as a helical span at residues 34–54; that stretch reads LLFWANVINLSVIVFGEILYL. At 55-66 the chain is on the extracellular side; it reads GVAYSDGKFIDA. The chain crosses the membrane as a helical span at residues 67 to 87; sequence VTVLSYIGFVIVGMSKMFFIW. Residues 88–130 are Cytoplasmic-facing; the sequence is WKKTDLSDLVKELEHIYPNGKAEEEMYRLDRYLRSCSRISITY. A helical transmembrane segment spans residues 131-151; that stretch reads ALLYSVLIWTFNLFSIMQFLV. The Extracellular portion of the chain corresponds to 152 to 199; the sequence is YEKLLKIRVVGQTLPYLMYFPWNWHENWTYYVLLFCQNFAGHTSASGQ. The N-linked (GlcNAc...) asparagine glycan is linked to asparagine 178. The helical transmembrane segment at 200–220 threads the bilayer; sequence ISTDLLLCAVATQVVMHFDYL. Residues 221–259 are Cytoplasmic-facing; sequence ARVVEKQVLDRDWSENSRFLAKTVQYHQRILRLMDVLND. Residues 260-280 traverse the membrane as a helical segment; it reads IFGIPLLLNFMVSTFVICFVG. Residues 281 to 290 lie on the Extracellular side of the membrane; the sequence is FQMTVGVPPD. A helical membrane pass occupies residues 291–311; the sequence is IMIKLFLFLFSSLSQVYLICH. Over 312 to 359 the chain is Cytoplasmic; that stretch reads YGQLIADASSSLSISAYKQNWQNADIRYRRALVFFIARPQRTTYLKAT. Residues 360–380 traverse the membrane as a helical segment; the sequence is IFMNITRATMTDLLQVSYKFF. Over 381–389 the chain is Extracellular; that stretch reads ALLRTMYIK.

Belongs to the insect chemoreceptor superfamily. Heteromeric odorant receptor channel (TC 1.A.69) family. Or49a subfamily. As to quaternary structure, interacts with Orco. Complexes exist early in the endomembrane system in olfactory sensory neurons (OSNs), coupling these complexes to the conserved ciliary trafficking pathway.

The protein resides in the cell membrane. In terms of biological role, odorant receptor which mediates acceptance or avoidance behavior, depending on its substrates. The odorant receptor repertoire encodes a large collection of odor stimuli that vary widely in identity, intensity, and duration. May form a complex with Orco to form odorant-sensing units, providing sensitive and prolonged odorant signaling and calcium permeability. This is Odorant receptor 85c (Or85c) from Drosophila melanogaster (Fruit fly).